The primary structure comprises 186 residues: Probable nicotinate-nucleotide adenylyltransferase (186 aa).

The protein belongs to the NadD family.

The enzyme catalyses nicotinate beta-D-ribonucleotide + ATP + H(+) = deamido-NAD(+) + diphosphate. It functions in the pathway cofactor biosynthesis; NAD(+) biosynthesis; deamido-NAD(+) from nicotinate D-ribonucleotide: step 1/1. Catalyzes the reversible adenylation of nicotinate mononucleotide (NaMN) to nicotinic acid adenine dinucleotide (NaAD). This is Probable nicotinate-nucleotide adenylyltransferase from Tropheryma whipplei (strain Twist) (Whipple's bacillus).